The chain runs to 342 residues: MSKASALLAGLTGAALVAAHGHVSHIVVNGVYYRNYDPTTDWYQPNPPTVIGWTAADQDNGFVEPNSFGTPDIICHKSATPGGGHATVAAGDKINIVWTPEWPESHIGPVIDYLAACNGDCETVDKSSLRWFKIDGAGYDKAAGRWAADALRANGNSWLVQIPSDLKAGNYVLRHEIIALHGAQSPNGAQAYPQCINLRVTGGGSNLPSGVAGTSLYKATDPGILFNPYVSSPDYTVPGPALIAGAASSIAQSTSVATATGTATVPGGGGANPTATTTAATSAAPSTTLRTTTTSAAQTTAPPSGDVQTKYGQCGGNGWTGPTVCAPGSSCSVLNEWYSQCL.

A signal peptide spans 1 to 19 (MSKASALLAGLTGAALVAA). Positions 20 and 106 each coordinate Cu(2+). 2 disulfides stabilise this stretch: cysteine 75–cysteine 195 and cysteine 117–cysteine 121. Residues histidine 181 and glutamine 190 each coordinate O2. Tyrosine 192 contributes to the Cu(2+) binding site. A disordered region spans residues 263–308 (ATVPGGGGANPTATTTAATSAAPSTTLRTTTTSAAQTTAPPSGDVQ). A compositionally biased stretch (low complexity) spans 272 to 305 (NPTATTTAATSAAPSTTLRTTTTSAAQTTAPPSG). The region spanning 306 to 342 (DVQTKYGQCGGNGWTGPTVCAPGSSCSVLNEWYSQCL) is the CBM1 domain.

It belongs to the polysaccharide monooxygenase AA9 family. Cu(2+) serves as cofactor.

It is found in the secreted. The enzyme catalyses [(1-&gt;4)-beta-D-glucosyl]n+m + reduced acceptor + O2 = 4-dehydro-beta-D-glucosyl-[(1-&gt;4)-beta-D-glucosyl]n-1 + [(1-&gt;4)-beta-D-glucosyl]m + acceptor + H2O.. The presence of lignin presents a significant source of antioxidants, which probably increase the activity by trapping liberated oxidized fragments. Functionally, lytic polysaccharide monooxygenase (LPMO) that depolymerizes crystalline and amorphous polysaccharides via the oxidation of scissile alpha- or beta-(1-4)-glycosidic bonds, yielding C1 or C4 oxidation products. Catalysis by LPMOs requires the reduction of the active-site copper from Cu(II) to Cu(I) by a reducing agent and H(2)O(2) or O(2) as a cosubstrate. Hydrolyzes weakly barley beta-glucan, carboxymethyl cellulose, lichenan, wheat arabinoxylan and birchwood xylan. Stimulates the hydrolysis of lignocellulosic substrates (such as hydrothermal pretreated wheat straw or steam-pretreated spruce), when combined with other cellulolytic enzymes. This chain is AA9 family lytic polysaccharide monooxygenase H, found in Thermothelomyces thermophilus (strain ATCC 42464 / BCRC 31852 / DSM 1799) (Sporotrichum thermophile).